The sequence spans 2126 residues: MGLGSAASGTGADRGAWTLAEPRVTPVAVIGMACRLPGGIDSPELLWKALLRGDDLITEVPPDRWDCDEFYDPQPGVPGRTVCKWGGFLDNPADFDCEFFGIGEREAIAIDPQQRLLLETSWEAMEHAGLTQQTLAGSATGVFAGVTHGDYTMVAADAKQLEEPYGYLGNSFSMASGRVAYAMRLHGPAITVDTACSSGLTAVHMACRSLHEGESDVALAGGVALMLEPRKAAAGSALGMLSPTGRCRAFDVAADGFVSGEGCAVVVLKRLPDALADGDRILAVIRGTSANQDGHTVNIATPSQPAQVAAYRAALAAGGVDAATVGMVEAHGPGTPIGDPIEYASVSEVYGVDGPCALASVKTNFGHTQSTAGVLGLIKVVLALKHGVVPRNLHFTRLPDEIAGITTNLFVPEVTTPWPTNGRQVPRRAAVSSYGFSGTNVHAVVEQAPQTEAQPHAASTPPTGTPALFTLSASSADALRQTAQRLTDWIQQHADSLVLSDLAYTLARRRTHRSVRTAVIASSVDELIAGLGEVADGDTVYQPAVGQDDRGPVWLFSGQGSQWAAMGADLLTNESVFAATVAELEPLIAAESGFSVTEAMTAPETVTGIDRVQPTIFAMQVALAATMAAYGVRPGAVIGHSMGESAAAVVAGVLSAEDGVRVICRRSKLMATIAGSAAMASVELPALAVQSELTALGIDDVVVAVVTAPQSTVIAGGTESVRKLVDIWERRDVLARAVAVDVASHSPQVDPILDELIAALADLNPKAPEIPYYSATLFDPREAPACDARYWADNLRHTVRFSAAVRSALDDGYRVFAELSPHPLLTHAVDQIAGSVGMPVAALAGMRREQPLPLGLRRLLTDLHNAGAAVDFSVLCPQGRLVDAPLPAWSHRFLFYDREGVDNRSPGGSTVAVHPLLGAHVRLPEEPERHAWQADVGTATLPWLGDHRIHNVAALPGAAYCEMALSAARAVLGEQSEVRDMRFEAMLLLDDQTPVSTVATVTSPGVVDFAVEALQEGVGHHLRRASAVLQQVSGECEPPAYDMASLLEAHPCRVDGEDLRRQFDKHGVQYGPAFTGLAVAYVAEDATATMLAEVALPGSIRSQQGLYAIHPALLDACFQSVGAHPDSQSVGSGLLVPLGVRRVRAYAPVRTARYCYTRVTKVELVGVEADIDVLDAHGTVLLAVCGLRIGTGVSERDKHNRVLNERLLTIEWHQRELPEMDPSGAGKWLLISDCAASDVTATRLADAFREHSAACTTMRWPLHDDQLAAADQLRDQVGSDEFSGVVVLTGSNTGTPHQGSADRGAEYVRRLVGIARELSDLPGAVPRMYVVTRGAQRVLADDCVNLEQGGLRGLLRTIGAEHPHLRATQIDVDEQTGVEQLARQLLATSEEDETAWRDNEWYVARLCPTPLRPQERRTIVADHQQSGMRLQIRTPGDMQTIELAAFHRVPPGPGQIEVAVRASSVNFADVLIAFGRYPSFEGHLPQLGTDFAGVVTAVGPGVTDHKVGDHVGGMSPNGCWGTFVTCDARLAATLPPGLGDAQAAAVTTAHATAWYGLHELARIRAGDTVLIHSGTGGVGQAAIAIARAAGAEIFATAGTPQRRELLRNMGIEHVYDSRSIEFAEQIRRDTNGRGVDVVLNSVTGAAQLAGLKLLAFRGRFVEIGKRDIYGDTKLGLFPFRRNLSFYAVDLGLLSATHPEELRDLLGTVYRLTAAGELPMPQSTHYPLVEAATAIRVMGNAEHTGKLVLHIPQTGKSLVTLPPEQAQVFRPDGSYIITGGLGGLGLFLAEKMAAAGCGRIVLNSRTQPTQKMRETIEAIAAMGSEVVVECGDIAQPGTAERLVATAVATGLPVRGVLHAAAVVEDATLANITDELLARDWAPKVHGAWELHEATSGQPLDWFCLFSSAAALTGSPGQSAYSAANSWLDAFAHWRQAQGLPATAIAWGAWSDIGQLGWWSASPARASALEESNYTAITPDEGAYAFEALLRHNRVYTGYAPVIGAPWLVAFAERSRFFEVFSSSNGSGTSKFRVELNELPRDEWPARLRQLVAEQVSLILRRTVDPDRPLPEYGLDSLGALELRTRIETETGIRLAPKNVSATVRGLADHLYEQLAPDDAPAAALSSQ.

Positions 24–447 (VTPVAVIGMA…GTNVHAVVEQ (424 aa)) constitute a Ketosynthase family 3 (KS3) domain. Cys196 functions as the Acyl-thioester intermediate; for beta-ketoacyl synthase activity in the catalytic mechanism. Catalysis depends on for beta-ketoacyl synthase activity residues His331 and His367. The interval 449–549 (PQTEAQPHAA…VYQPAVGQDD (101 aa)) is linker domain (LD). The interval 550 to 849 (RGPVWLFSGQ…VAALAGMRRE (300 aa)) is acyltransferase (AT). Ser641 functions as the Acyl-ester intermediate; for acyltransferase activity in the catalytic mechanism. Residues 909 to 1191 (STVAVHPLLG…LAVCGLRIGT (283 aa)) form a dehydratase (DH) region. The N-terminal hotdog fold stretch occupies residues 914–1032 (HPLLGAHVRL…RRASAVLQQV (119 aa)). The 285-residue stretch at 914 to 1198 (HPLLGAHVRL…IGTGVSERDK (285 aa)) folds into the PKS/mFAS DH domain. His947 acts as the Proton acceptor; for dehydratase activity in catalysis. The tract at residues 1051–1198 (PCRVDGEDLR…IGTGVSERDK (148 aa)) is C-terminal hotdog fold. The active-site Proton donor; for dehydratase activity is Asp1115. Residues 1227-1398 (KWLLISDCAA…SEEDETAWRD (172 aa)) form a pseudo beta-ketoacyl reductase (PsiKR) region. The enoylreductase (ER) stretch occupies residues 1426 to 1750 (SGMRLQIRTP…EHTGKLVLHI (325 aa)). Positions 1772 to 2019 (GSYIITGGLG…AERSRFFEVF (248 aa)) are beta-ketoacyl reductase (KR). Residues 1780–1783 (LGGL), 1803–1806 (SRTQ), 1831–1832 (DI), and 1904–1905 (FS) each bind NADP(+). A Carrier domain is found at 2040–2126 (DEWPARLRQL…DAPAAALSSQ (87 aa)). Residue Ser2075 is modified to O-(pantetheine 4'-phosphoryl)serine.

Requires pantetheine 4'-phosphate as cofactor.

The enzyme catalyses hexadecanoyl-[(hydroxy)phthioceranic acid synthase] + 7 (S)-methylmalonyl-CoA + 14 NADPH + 21 H(+) = C37-phthioceranyl-[(hydroxy)phthioceranic acid synthase] + 7 CO2 + 14 NADP(+) + 7 CoA + 7 H2O. The catalysed reaction is hexadecanoyl-[(hydroxy)phthioceranic acid synthase] + 8 (S)-methylmalonyl-CoA + 16 NADPH + 24 H(+) = C40-phthioceranyl-[(hydroxy)phthioceranic acid synthase] + 8 CO2 + 16 NADP(+) + 8 CoA + 8 H2O. It functions in the pathway lipid metabolism; fatty acid biosynthesis. Its pathway is glycolipid metabolism; sulfolipid-1 biosynthesis. Its function is as follows. Involved in sulfolipid-1 biosynthesis. Catalyzes the synthesis of the hepta- and octamethyl phthioceranic and hydroxyphthioceranic acids, the methyl-branched acyl constituents of sulfolipids. The chain is Phthioceranic/hydroxyphthioceranic acid synthase (pks2) from Mycobacterium bovis (strain ATCC BAA-935 / AF2122/97).